Consider the following 366-residue polypeptide: tRNA/tmRNA (uracil-C(5))-methyltransferase (366 aa).

Residues Q190, Y218, N223, E239, and D299 each contribute to the S-adenosyl-L-methionine site. C324 acts as the Nucleophile in catalysis. The active-site Proton acceptor is the E358.

It belongs to the class I-like SAM-binding methyltransferase superfamily. RNA M5U methyltransferase family. TrmA subfamily.

It carries out the reaction uridine(54) in tRNA + S-adenosyl-L-methionine = 5-methyluridine(54) in tRNA + S-adenosyl-L-homocysteine + H(+). The enzyme catalyses uridine(341) in tmRNA + S-adenosyl-L-methionine = 5-methyluridine(341) in tmRNA + S-adenosyl-L-homocysteine + H(+). Its function is as follows. Dual-specificity methyltransferase that catalyzes the formation of 5-methyluridine at position 54 (m5U54) in all tRNAs, and that of position 341 (m5U341) in tmRNA (transfer-mRNA). The sequence is that of tRNA/tmRNA (uracil-C(5))-methyltransferase from Salmonella paratyphi C (strain RKS4594).